We begin with the raw amino-acid sequence, 216 residues long: Probable nicotinate-nucleotide adenylyltransferase (216 aa).

Belongs to the NadD family.

It carries out the reaction nicotinate beta-D-ribonucleotide + ATP + H(+) = deamido-NAD(+) + diphosphate. It functions in the pathway cofactor biosynthesis; NAD(+) biosynthesis; deamido-NAD(+) from nicotinate D-ribonucleotide: step 1/1. Its function is as follows. Catalyzes the reversible adenylation of nicotinate mononucleotide (NaMN) to nicotinic acid adenine dinucleotide (NaAD). This is Probable nicotinate-nucleotide adenylyltransferase from Geotalea uraniireducens (strain Rf4) (Geobacter uraniireducens).